A 585-amino-acid chain; its full sequence is uncharacterized protein (585 aa).

The interval 1–34 (MNAYVRDSESVYSESYPPENFISNEPEKSKDKDN) is disordered. Residues 1–89 (MNAYVRDSES…KRRLKSRHIQ (89 aa)) are Cytoplasmic-facing. The span at 10-19 (SVYSESYPPE) shows a compositional bias: low complexity. Positions 25–34 (EPEKSKDKDN) are enriched in basic and acidic residues. The helical transmembrane segment at 90–110 (MIGIGGAIGTGVWVGSSKSLY) threads the bilayer. At 111–121 (RGGAASVLIDY) the chain is on the extracellular side. Residues 122–142 (CIVGTMVFCTVYALGELAVAF) traverse the membrane as a helical segment. Topologically, residues 143-159 (PTRGSFVTHATRFIDES) are cytoplasmic. Residues 160–180 (WGFALSWNYVFSFIVTIPLEL) traverse the membrane as a helical segment. Residues 181–193 (TTGTMMIKYWTNL) lie on the Extracellular side of the membrane. A helical membrane pass occupies residues 194 to 214 (NSGIWVTVFIVFLFFINIFGV). Residues 215–221 (KGYGEME) lie on the Cytoplasmic side of the membrane. A helical membrane pass occupies residues 222-242 (FIMSTIKVVAMCGFIILGIII). Topologically, residues 243-271 (DCGGVPTDHRGYMGTHIFRENAFRHKFKG) are extracellular. The chain crosses the membrane as a helical span at residues 272–292 (FCAVFTSAAFSFSGTEYVGVA). The Cytoplasmic segment spans residues 293–313 (AAETENPAKAFPVAVRQTLFR). Residues 314–334 (IAIFYILSLFIVSLLISGADP) form a helical membrane-spanning segment. Over 335-361 (RLTSYHGVDASPFVLAIKDANIKALPS) the chain is Extracellular. The chain crosses the membrane as a helical span at residues 362 to 382 (ILNAIILISVISSANAQLYAG). Residues 383 to 407 (SRAIHSLGCNGFAPKCFTLVDREGR) lie on the Cytoplasmic side of the membrane. The helical transmembrane segment at 408–428 (PLVALLILFLFMFLGYLVETG) threads the bilayer. The Extracellular segment spans residues 429-436 (QYDTVFDW). Residues 437 to 457 (MLSISGLGTLFCWGSICLAHI) traverse the membrane as a helical segment. Residues 458–486 (RYRAAMKHQNRSLKEVGFVSPFNVYASYY) are Cytoplasmic-facing. A helical transmembrane segment spans residues 487–507 (AFILVCLVLAAEFYVSIFPVG). Topologically, residues 508-511 (GKPD) are extracellular. Residues 512–532 (ASAFFENYLSAPVILVFFICH) traverse the membrane as a helical segment. The Cytoplasmic portion of the chain corresponds to 533–585 (KLYYKTKRITLSNMDLETDFAYKTPVEEEEEEEKSAGSLSIKQRMKKLSDMMC).

This sequence belongs to the amino acid-polyamine-organocation (APC) superfamily.

It localises to the endoplasmic reticulum. Its subcellular location is the membrane. This is an uncharacterized protein from Schizosaccharomyces pombe (strain 972 / ATCC 24843) (Fission yeast).